The sequence spans 732 residues: Eukaryotic translation initiation factor 3 subunit B (732 aa).

Residues Met-1 to Ala-94 are sufficient for interaction with HCR1 and TIF32. The sufficient for interaction with PIC8 stretch occupies residues Met-1–Phe-219. In terms of domain architecture, RRM spans Asn-37–Asp-120. WD repeat units follow at residues Ala-185 to Arg-224, Pro-237 to Thr-280, Glu-439 to Ala-481, and Val-507 to Asn-554.

The protein belongs to the eIF-3 subunit B family. In terms of assembly, component of the eukaryotic translation initiation factor 3 (eIF-3) complex.

It localises to the cytoplasm. RNA-binding component of the eukaryotic translation initiation factor 3 (eIF-3) complex, which is involved in protein synthesis of a specialized repertoire of mRNAs and, together with other initiation factors, stimulates binding of mRNA and methionyl-tRNAi to the 40S ribosome. The eIF-3 complex specifically targets and initiates translation of a subset of mRNAs involved in cell proliferation. The polypeptide is Eukaryotic translation initiation factor 3 subunit B (Kluyveromyces lactis (strain ATCC 8585 / CBS 2359 / DSM 70799 / NBRC 1267 / NRRL Y-1140 / WM37) (Yeast)).